Consider the following 292-residue polypeptide: MPWLQVRLAISPEQAETYEDALLEVGAVSVTFMDAEDQPIFEPDLNTTPLWSHTHLLALFEADADPEQVFAHLRLLTGAELPEHQAEVIEDQDWERSWMDNFQPMRFGRRLWIVPSWHDAPEKDAVNLLLDPGLAFGTGTHPTTALCLEWLDGQQLEGTQVLDFGCGSGILAIAALLLGAREAVGTDIDVQAIEASRDNAQRNGIADEKLALYLPEHMPAMQADVLVANILAGPLVSLAPQLSGLVRPGGLLALSGILAEQGEDVAAAYAADFELDPIVVRDGWVRISGRRR.

Residues Thr-144, Gly-165, Asp-187, and Asn-229 each contribute to the S-adenosyl-L-methionine site.

This sequence belongs to the methyltransferase superfamily. PrmA family.

The protein resides in the cytoplasm. It carries out the reaction L-lysyl-[protein] + 3 S-adenosyl-L-methionine = N(6),N(6),N(6)-trimethyl-L-lysyl-[protein] + 3 S-adenosyl-L-homocysteine + 3 H(+). Functionally, methylates ribosomal protein L11. This is Ribosomal protein L11 methyltransferase from Pseudomonas putida (strain ATCC 700007 / DSM 6899 / JCM 31910 / BCRC 17059 / LMG 24140 / F1).